Reading from the N-terminus, the 913-residue chain is Cadherin-4 (913 aa).

Residues 1–19 (MRTGSRLLLVLLVWGSAAA) form the signal peptide. The propeptide occupies 20–166 (LNGDLTVRPT…SAKGLRRQKR (147 aa)). Cadherin domains lie at 167–274 (DWVI…RPEF), 275–389 (INQV…PPEF), 390–504 (TTST…APYF), 505–610 (PTNH…DNAP), and 611–721 (ELLP…TIGA). Residues 167–731 (DWVIPPINVP…VAAAGLGTGA (565 aa)) lie on the Extracellular side of the membrane. N-linked (GlcNAc...) asparagine glycosylation is found at asparagine 280, asparagine 409, asparagine 554, asparagine 629, asparagine 658, and asparagine 699. Residues 732–753 (IIAILICIIILLTMVLLFVVWM) form a helical membrane-spanning segment. Residues 754–913 (KRREKERHTK…ADMYGGGEED (160 aa)) are Cytoplasmic-facing.

As to expression, embryonic brain and neuronal retina.

It localises to the cell membrane. Its function is as follows. Cadherins are calcium-dependent cell adhesion proteins. They preferentially interact with themselves in a homophilic manner in connecting cells; cadherins may thus contribute to the sorting of heterogeneous cell types. May play an important role in retinal development. The chain is Cadherin-4 (CDH4) from Gallus gallus (Chicken).